The sequence spans 326 residues: ATP synthase subunit b 2 (326 aa).

A helical transmembrane segment spans residues 2 to 22 (LIDWFTVVAQALNFLILVWLL). Composition is skewed to basic and acidic residues over residues 275-298 (QQGR…RKEN) and 306-326 (PPPE…IGSP). The tract at residues 275 to 326 (QQGRKEGRAVQNWDKAESEIRKENLSPAKTEPPPEAKAKPKPEEPKPEIGSP) is disordered.

This sequence belongs to the ATPase B chain family. In terms of assembly, F-type ATPases have 2 components, F(1) - the catalytic core - and F(0) - the membrane proton channel. F(1) has five subunits: alpha(3), beta(3), gamma(1), delta(1), epsilon(1). F(0) has three main subunits: a(1), b(2) and c(10-14). The alpha and beta chains form an alternating ring which encloses part of the gamma chain. F(1) is attached to F(0) by a central stalk formed by the gamma and epsilon chains, while a peripheral stalk is formed by the delta and b chains.

It is found in the cell inner membrane. In terms of biological role, f(1)F(0) ATP synthase produces ATP from ADP in the presence of a proton or sodium gradient. F-type ATPases consist of two structural domains, F(1) containing the extramembraneous catalytic core and F(0) containing the membrane proton channel, linked together by a central stalk and a peripheral stalk. During catalysis, ATP synthesis in the catalytic domain of F(1) is coupled via a rotary mechanism of the central stalk subunits to proton translocation. Functionally, component of the F(0) channel, it forms part of the peripheral stalk, linking F(1) to F(0). This chain is ATP synthase subunit b 2, found in Albidiferax ferrireducens (strain ATCC BAA-621 / DSM 15236 / T118) (Rhodoferax ferrireducens).